The chain runs to 219 residues: uncharacterized protein (219 aa).

A disordered region spans residues 70 to 102; the sequence is VHIGDNHPEPKNESKTQPKIESKKEPTLKQEEQ. Basic and acidic residues predominate over residues 73–101; it reads GDNHPEPKNESKTQPKIESKKEPTLKQEE. Residues 96 to 120 are a coiled coil; that stretch reads TLKQEEQTIQAEEEAQKIAKEETRE. Helical transmembrane passes span 126 to 146, 153 to 173, and 192 to 212; these read GGEI…VNML, IFGL…VIVL, and TYGV…AIFF.

The protein localises to the membrane. This is an uncharacterized protein from Acanthamoeba polyphaga mimivirus (APMV).